We begin with the raw amino-acid sequence, 248 residues long: 2,3-bisphosphoglycerate-dependent phosphoglycerate mutase (248 aa).

Residues 8-15 (RHGESTWN), 21-22 (TG), arginine 60, 87-90 (ERHY), lysine 98, 114-115 (RR), and 183-184 (GN) each bind substrate. Catalysis depends on histidine 9, which acts as the Tele-phosphohistidine intermediate. The active-site Proton donor/acceptor is the glutamate 87.

This sequence belongs to the phosphoglycerate mutase family. BPG-dependent PGAM subfamily. Homodimer.

It carries out the reaction (2R)-2-phosphoglycerate = (2R)-3-phosphoglycerate. The protein operates within carbohydrate degradation; glycolysis; pyruvate from D-glyceraldehyde 3-phosphate: step 3/5. Its function is as follows. Catalyzes the interconversion of 2-phosphoglycerate and 3-phosphoglycerate. This chain is 2,3-bisphosphoglycerate-dependent phosphoglycerate mutase, found in Burkholderia ambifaria (strain ATCC BAA-244 / DSM 16087 / CCUG 44356 / LMG 19182 / AMMD) (Burkholderia cepacia (strain AMMD)).